The primary structure comprises 505 residues: Maturase K (505 aa).

The protein belongs to the intron maturase 2 family. MatK subfamily.

The protein resides in the plastid. Its subcellular location is the chloroplast. Functionally, usually encoded in the trnK tRNA gene intron. Probably assists in splicing its own and other chloroplast group II introns. This is Maturase K from Portulacaria afra (Elephant's food).